The chain runs to 151 residues: D-aminoacyl-tRNA deacylase (151 aa).

Positions 136 to 137 (GP) match the Gly-cisPro motif, important for rejection of L-amino acids motif.

This sequence belongs to the DTD family. As to quaternary structure, homodimer.

The protein localises to the cytoplasm. The catalysed reaction is glycyl-tRNA(Ala) + H2O = tRNA(Ala) + glycine + H(+). The enzyme catalyses a D-aminoacyl-tRNA + H2O = a tRNA + a D-alpha-amino acid + H(+). In terms of biological role, an aminoacyl-tRNA editing enzyme that deacylates mischarged D-aminoacyl-tRNAs. Also deacylates mischarged glycyl-tRNA(Ala), protecting cells against glycine mischarging by AlaRS. Acts via tRNA-based rather than protein-based catalysis; rejects L-amino acids rather than detecting D-amino acids in the active site. By recycling D-aminoacyl-tRNA to D-amino acids and free tRNA molecules, this enzyme counteracts the toxicity associated with the formation of D-aminoacyl-tRNA entities in vivo and helps enforce protein L-homochirality. The chain is D-aminoacyl-tRNA deacylase from Lactococcus lactis subsp. lactis (strain IL1403) (Streptococcus lactis).